Reading from the N-terminus, the 1163-residue chain is Putative beta-glucuronidase (1163 aa).

An N-terminal signal peptide occupies residues 1-20; the sequence is MPRFLKYILGLFLISISAFG.

It belongs to the glycosyl hydrolase 2 family.

It localises to the periplasm. It catalyses the reaction a beta-D-glucuronoside + H2O = D-glucuronate + an alcohol. Functionally, glycoside hydrolase involved in ulvan degradation. Ulvan is the main polysaccharide component of the Ulvales (green seaweed) cell wall. It is composed of disaccharide building blocks comprising 3-sulfated rhamnose (Rha3S) linked to D-glucuronic acid (GlcA), L-iduronic acid (IduA), or D-xylose (Xyl). In Formosa agariphila (strain DSM 15362 / KCTC 12365 / LMG 23005 / KMM 3901 / M-2Alg 35-1), this protein is Putative beta-glucuronidase.